The primary structure comprises 248 residues: 3-deoxy-manno-octulosonate cytidylyltransferase (248 aa).

This sequence belongs to the KdsB family.

It localises to the cytoplasm. It catalyses the reaction 3-deoxy-alpha-D-manno-oct-2-ulosonate + CTP = CMP-3-deoxy-beta-D-manno-octulosonate + diphosphate. It functions in the pathway nucleotide-sugar biosynthesis; CMP-3-deoxy-D-manno-octulosonate biosynthesis; CMP-3-deoxy-D-manno-octulosonate from 3-deoxy-D-manno-octulosonate and CTP: step 1/1. Its pathway is bacterial outer membrane biogenesis; lipopolysaccharide biosynthesis. In terms of biological role, activates KDO (a required 8-carbon sugar) for incorporation into bacterial lipopolysaccharide in Gram-negative bacteria. This Enterobacter sp. (strain 638) protein is 3-deoxy-manno-octulosonate cytidylyltransferase.